The chain runs to 228 residues: Cytochrome c oxidase subunit 2 (228 aa).

Topologically, residues 1-26 (MSTWANLGLQDSASPLMEQLIFFHDH) are mitochondrial intermembrane. A helical transmembrane segment spans residues 27 to 48 (ALLILVMITVLVGYLMFMLFFN). The Mitochondrial matrix portion of the chain corresponds to 49–62 (NYVNRFLLHGQLIE). The helical transmembrane segment at 63–82 (MIWTILPAIILLFIALPSLR) threads the bilayer. Residues 83-228 (LLYLLDEINE…FIKWISSNNS (146 aa)) lie on the Mitochondrial intermembrane side of the membrane. Residues His-161, Cys-196, Glu-198, Cys-200, His-204, and Met-207 each coordinate Cu cation. Glu-198 contacts Mg(2+).

This sequence belongs to the cytochrome c oxidase subunit 2 family. In terms of assembly, component of the cytochrome c oxidase (complex IV, CIV), a multisubunit enzyme composed of a catalytic core of 3 subunits and several supernumerary subunits. The complex exists as a monomer or a dimer and forms supercomplexes (SCs) in the inner mitochondrial membrane with ubiquinol-cytochrome c oxidoreductase (cytochrome b-c1 complex, complex III, CIII). Cu cation serves as cofactor.

The protein resides in the mitochondrion inner membrane. It catalyses the reaction 4 Fe(II)-[cytochrome c] + O2 + 8 H(+)(in) = 4 Fe(III)-[cytochrome c] + 2 H2O + 4 H(+)(out). Component of the cytochrome c oxidase, the last enzyme in the mitochondrial electron transport chain which drives oxidative phosphorylation. The respiratory chain contains 3 multisubunit complexes succinate dehydrogenase (complex II, CII), ubiquinol-cytochrome c oxidoreductase (cytochrome b-c1 complex, complex III, CIII) and cytochrome c oxidase (complex IV, CIV), that cooperate to transfer electrons derived from NADH and succinate to molecular oxygen, creating an electrochemical gradient over the inner membrane that drives transmembrane transport and the ATP synthase. Cytochrome c oxidase is the component of the respiratory chain that catalyzes the reduction of oxygen to water. Electrons originating from reduced cytochrome c in the intermembrane space (IMS) are transferred via the dinuclear copper A center (CU(A)) of subunit 2 and heme A of subunit 1 to the active site in subunit 1, a binuclear center (BNC) formed by heme A3 and copper B (CU(B)). The BNC reduces molecular oxygen to 2 water molecules using 4 electrons from cytochrome c in the IMS and 4 protons from the mitochondrial matrix. The polypeptide is Cytochrome c oxidase subunit 2 (mt:CoII) (Drosophila melanogaster (Fruit fly)).